The chain runs to 382 residues: S-adenosylmethionine synthase (382 aa).

His-15 is an ATP binding site. Residue Asp-17 coordinates Mg(2+). Residue Glu-43 coordinates K(+). Positions 56 and 99 each coordinate L-methionine. The flexible loop stretch occupies residues 99–109; that stretch reads QSPDINQGVDR. Residues 164–166, 230–231, Asp-239, 245–246, Ala-262, and Lys-266 contribute to the ATP site; these read DAK, RF, and RK. Asp-239 serves as a coordination point for L-methionine. Lys-270 serves as a coordination point for L-methionine.

It belongs to the AdoMet synthase family. Homotetramer; dimer of dimers. It depends on Mg(2+) as a cofactor. The cofactor is K(+).

It is found in the cytoplasm. The enzyme catalyses L-methionine + ATP + H2O = S-adenosyl-L-methionine + phosphate + diphosphate. It functions in the pathway amino-acid biosynthesis; S-adenosyl-L-methionine biosynthesis; S-adenosyl-L-methionine from L-methionine: step 1/1. Functionally, catalyzes the formation of S-adenosylmethionine (AdoMet) from methionine and ATP. The overall synthetic reaction is composed of two sequential steps, AdoMet formation and the subsequent tripolyphosphate hydrolysis which occurs prior to release of AdoMet from the enzyme. The sequence is that of S-adenosylmethionine synthase from Psychromonas ingrahamii (strain DSM 17664 / CCUG 51855 / 37).